The chain runs to 179 residues: Translation initiation factor IF-3 (179 aa).

It belongs to the IF-3 family. In terms of assembly, monomer.

The protein resides in the cytoplasm. In terms of biological role, IF-3 binds to the 30S ribosomal subunit and shifts the equilibrium between 70S ribosomes and their 50S and 30S subunits in favor of the free subunits, thus enhancing the availability of 30S subunits on which protein synthesis initiation begins. This Buchnera aphidicola subsp. Acyrthosiphon pisum (strain 5A) protein is Translation initiation factor IF-3.